The chain runs to 455 residues: Ribulose bisphosphate carboxylase large chain (455 aa).

Position 5 is an N6,N6,N6-trimethyllysine (lysine 5). Substrate-binding residues include asparagine 114 and threonine 164. The active-site Proton acceptor is the lysine 166. Position 168 (lysine 168) interacts with substrate. Mg(2+)-binding residues include lysine 192, aspartate 194, and glutamate 195. Lysine 192 bears the N6-carboxylysine mark. The active-site Proton acceptor is histidine 285. Residues arginine 286, histidine 318, and serine 370 each contribute to the substrate site.

It belongs to the RuBisCO large chain family. Type I subfamily. In terms of assembly, heterohexadecamer of 8 large chains and 8 small chains; disulfide-linked. The disulfide link is formed within the large subunit homodimers. Mg(2+) serves as cofactor. The disulfide bond which can form in the large chain dimeric partners within the hexadecamer appears to be associated with oxidative stress and protein turnover.

It is found in the plastid. The protein resides in the chloroplast. It catalyses the reaction 2 (2R)-3-phosphoglycerate + 2 H(+) = D-ribulose 1,5-bisphosphate + CO2 + H2O. The catalysed reaction is D-ribulose 1,5-bisphosphate + O2 = 2-phosphoglycolate + (2R)-3-phosphoglycerate + 2 H(+). Its function is as follows. RuBisCO catalyzes two reactions: the carboxylation of D-ribulose 1,5-bisphosphate, the primary event in carbon dioxide fixation, as well as the oxidative fragmentation of the pentose substrate in the photorespiration process. Both reactions occur simultaneously and in competition at the same active site. The protein is Ribulose bisphosphate carboxylase large chain of Lupinus luteus (European yellow lupine).